The sequence spans 158 residues: NAD(P)H-quinone oxidoreductase subunit J, chloroplastic (158 aa).

This sequence belongs to the complex I 30 kDa subunit family. NDH is composed of at least 16 different subunits, 5 of which are encoded in the nucleus.

Its subcellular location is the plastid. The protein resides in the chloroplast thylakoid membrane. The enzyme catalyses a plastoquinone + NADH + (n+1) H(+)(in) = a plastoquinol + NAD(+) + n H(+)(out). It carries out the reaction a plastoquinone + NADPH + (n+1) H(+)(in) = a plastoquinol + NADP(+) + n H(+)(out). NDH shuttles electrons from NAD(P)H:plastoquinone, via FMN and iron-sulfur (Fe-S) centers, to quinones in the photosynthetic chain and possibly in a chloroplast respiratory chain. The immediate electron acceptor for the enzyme in this species is believed to be plastoquinone. Couples the redox reaction to proton translocation, and thus conserves the redox energy in a proton gradient. This chain is NAD(P)H-quinone oxidoreductase subunit J, chloroplastic, found in Platanus occidentalis (Sycamore).